A 101-amino-acid chain; its full sequence is Small ribosomal subunit protein uS14A (101 aa).

Disordered stretches follow at residues 1-21 (MAKK…AHHA) and 49-73 (QRLP…PRGT). Composition is skewed to basic and acidic residues over residues 8–21 (AKNE…AHHA) and 61–70 (RNRDAADGRP).

Belongs to the universal ribosomal protein uS14 family. As to quaternary structure, part of the 30S ribosomal subunit. Contacts proteins S3 and S10.

In terms of biological role, binds 16S rRNA, required for the assembly of 30S particles and may also be responsible for determining the conformation of the 16S rRNA at the A site. This is Small ribosomal subunit protein uS14A from Kineococcus radiotolerans (strain ATCC BAA-149 / DSM 14245 / SRS30216).